We begin with the raw amino-acid sequence, 529 residues long: Cytochrome P450 monooxygenase patI (529 aa).

Topologically, residues 1–8 (MDFTQVPP) are cytoplasmic. The helical transmembrane segment at 9–25 (SYILGVLLSSTSILFCL) threads the bilayer. The Lumenal segment spans residues 26-529 (KYLLRSGYRP…EAQGVFSRFD (504 aa)). Residues asparagine 81 and asparagine 383 are each glycosylated (N-linked (GlcNAc...) asparagine). Cysteine 449 contributes to the heme binding site.

Belongs to the cytochrome P450 family. Heme is required as a cofactor.

It is found in the endoplasmic reticulum membrane. It catalyses the reaction 3-hydroxybenzyl alcohol + reduced [NADPH--hemoprotein reductase] + O2 = gentisyl alcohol + oxidized [NADPH--hemoprotein reductase] + H2O + H(+). It participates in mycotoxin biosynthesis; patulin biosynthesis. Its function is as follows. Cytochrome P450 monooxygenase; part of the gene cluster that mediates the biosynthesis of patulin, an acetate-derived tetraketide mycotoxin produced by several fungal species that shows antimicrobial properties against several bacteria. PatI catalyzes the conversion of m-hydroxybenzyl alcohol into gentisyl alcohol. The pathway begins with the synthesis of 6-methylsalicylic acid by the polyketide synthase (PKS) patK via condensation of acetate and malonate units. The 6-methylsalicylic acid decarboxylase patG then catalyzes the decarboxylation of 6-methylsalicylic acid to yield m-cresol (also known as 3-methylphenol). These first reactions occur in the cytosol. The intermediate m-cresol is then transported into the endoplasmic reticulum where the cytochrome P450 monooxygenase patH converts it to m-hydroxybenzyl alcohol, which is further converted to gentisyl alcohol by the cytochrome P450 monooxygenase patI. The oxidoreductases patJ and patO further convert gentisyl alcohol to isoepoxydon in the vacuole. PatN catalyzes then the transformation of isoepoxydon into phyllostine. The cluster protein patF is responsible for the conversion from phyllostine to neopatulin whereas the alcohol dehydrogenase patD converts neopatulin to E-ascladiol. The steps between isoepoxydon and E-ascladiol occur in the cytosol, and E-ascladiol is probably secreted to the extracellular space by one of the cluster-specific transporters patC or patM. Finally, the secreted patulin synthase patE catalyzes the conversion of E-ascladiol to patulin. The sequence is that of Cytochrome P450 monooxygenase patI from Aspergillus clavatus (strain ATCC 1007 / CBS 513.65 / DSM 816 / NCTC 3887 / NRRL 1 / QM 1276 / 107).